We begin with the raw amino-acid sequence, 152 residues long: 3-hydroxyacyl-[acyl-carrier-protein] dehydratase FabZ (152 aa).

Residue H54 is part of the active site.

It belongs to the thioester dehydratase family. FabZ subfamily.

The protein resides in the cytoplasm. The enzyme catalyses a (3R)-hydroxyacyl-[ACP] = a (2E)-enoyl-[ACP] + H2O. Involved in unsaturated fatty acids biosynthesis. Catalyzes the dehydration of short chain beta-hydroxyacyl-ACPs and long chain saturated and unsaturated beta-hydroxyacyl-ACPs. This is 3-hydroxyacyl-[acyl-carrier-protein] dehydratase FabZ from Buchnera aphidicola subsp. Schizaphis graminum (strain Sg).